The following is an 83-amino-acid chain: uncharacterized protein (83 aa).

Transmembrane regions (helical) follow at residues 23–43 (FSLW…QLIK) and 56–76 (TIFV…CVFL).

It is found in the cell membrane. This is an uncharacterized protein from Bacillus subtilis (strain 168).